Here is a 42-residue protein sequence, read N- to C-terminus: Lebocin-like anionic peptide 1 (42 aa).

Hemolymph.

The protein resides in the secreted. Antimicrobial protein. Has antibacterial activity against the Gram-positive bacteria M.luteus (MIC=22.7 uM) and L.monocytogenes (MIC=90.9 uM). Lacks antibacterial activity against the Gram-positive bacteria B.circulans, S.aureus, and S.lutea, and the Gram-negative bacteria E.coli D31, E.coli ATCC 25922, and S.typhimurium. Has antifungal activity against A.niger (MIC=90.9 uM) and T.harzianum (MIC=90.9 uM), but lacks antifungal activity against S.cerevisiae, P.pastoris, Z.marxianus, C.albicans, C.fructus, and F.oxysporum. The polypeptide is Lebocin-like anionic peptide 1 (Galleria mellonella (Greater wax moth)).